The primary structure comprises 430 residues: Serine--tRNA ligase (430 aa).

Threonine 237 to glutamate 239 serves as a coordination point for L-serine. Arginine 268–glutamate 270 contacts ATP. Residue glutamate 291 participates in L-serine binding. ATP is bound at residue glutamate 355–serine 358. L-serine is bound at residue serine 391.

Belongs to the class-II aminoacyl-tRNA synthetase family. Type-1 seryl-tRNA synthetase subfamily. Homodimer. The tRNA molecule binds across the dimer.

The protein localises to the cytoplasm. The enzyme catalyses tRNA(Ser) + L-serine + ATP = L-seryl-tRNA(Ser) + AMP + diphosphate + H(+). The catalysed reaction is tRNA(Sec) + L-serine + ATP = L-seryl-tRNA(Sec) + AMP + diphosphate + H(+). It functions in the pathway aminoacyl-tRNA biosynthesis; selenocysteinyl-tRNA(Sec) biosynthesis; L-seryl-tRNA(Sec) from L-serine and tRNA(Sec): step 1/1. Catalyzes the attachment of serine to tRNA(Ser). Is also able to aminoacylate tRNA(Sec) with serine, to form the misacylated tRNA L-seryl-tRNA(Sec), which will be further converted into selenocysteinyl-tRNA(Sec). This Yersinia enterocolitica serotype O:8 / biotype 1B (strain NCTC 13174 / 8081) protein is Serine--tRNA ligase.